The sequence spans 678 residues: PTS system glucose-specific EIICBA component (678 aa).

The 412-residue stretch at 3–414 (KKLFGQLQRI…FKYKTPGRED (412 aa)) folds into the PTS EIIC type-1 domain. 11 consecutive transmembrane segments (helical) span residues 16 to 36 (LMLPVAILPAAGLLLAIGTAM), 63 to 83 (AGGIIFDNLPMIFAMGVAIGL), 89 to 109 (VAAIAAFVGYLVMNKTMGAFL), 126 to 146 (VLGIPTLQTGVFGGIIIGALA), 170 to 190 (FVPIMMATTSFILAFPMAWIW), 211 to 231 (LAVFLFGFIKRLLIPFGLHHI), 273 to 293 (FMQGEFPVMMFGLPAAALAIY), 303 to 323 (VVAGLMGSAALTSFLTGITEP), 329 to 349 (LFVAPVLFFVHAILDGLSFLI), 355 to 375 (VHLGYTFSGGFIDYVLLGVLP), and 382 to 402 (LVIPVGVVYAFIYYFVFRFLI). A PTS EIIB type-1 domain is found at 425 to 506 (SELPFNVLKA…SLIMKGEITK (82 aa)). Cys447 acts as the Phosphocysteine intermediate; for EIIB activity in catalysis. Positions 547–651 (DQVFAQKMMG…STVTPLIITN (105 aa)) constitute a PTS EIIA type-1 domain. His599 (tele-phosphohistidine intermediate; for EIIA activity) is an active-site residue.

It is found in the cell membrane. The catalysed reaction is N(pros)-phospho-L-histidyl-[protein] + D-glucose(out) = D-glucose 6-phosphate(in) + L-histidyl-[protein]. The phosphoenolpyruvate-dependent sugar phosphotransferase system (sugar PTS), a major carbohydrate active transport system, catalyzes the phosphorylation of incoming sugar substrates concomitantly with their translocation across the cell membrane. This system is involved in glucose transport. The protein is PTS system glucose-specific EIICBA component (ptsG) of Staphylococcus saprophyticus subsp. saprophyticus (strain ATCC 15305 / DSM 20229 / NCIMB 8711 / NCTC 7292 / S-41).